The sequence spans 222 residues: Phosphoribosylformylglycinamidine synthase subunit PurQ (222 aa).

A Glutamine amidotransferase type-1 domain is found at 3–222; it reads AAVVVFPGSN…RALTGALAAV (220 aa). The active-site Nucleophile is the C86. Catalysis depends on residues H194 and E196.

As to quaternary structure, part of the FGAM synthase complex composed of 1 PurL, 1 PurQ and 2 PurS subunits.

The protein localises to the cytoplasm. It catalyses the reaction N(2)-formyl-N(1)-(5-phospho-beta-D-ribosyl)glycinamide + L-glutamine + ATP + H2O = 2-formamido-N(1)-(5-O-phospho-beta-D-ribosyl)acetamidine + L-glutamate + ADP + phosphate + H(+). It carries out the reaction L-glutamine + H2O = L-glutamate + NH4(+). Its pathway is purine metabolism; IMP biosynthesis via de novo pathway; 5-amino-1-(5-phospho-D-ribosyl)imidazole from N(2)-formyl-N(1)-(5-phospho-D-ribosyl)glycinamide: step 1/2. Part of the phosphoribosylformylglycinamidine synthase complex involved in the purines biosynthetic pathway. Catalyzes the ATP-dependent conversion of formylglycinamide ribonucleotide (FGAR) and glutamine to yield formylglycinamidine ribonucleotide (FGAM) and glutamate. The FGAM synthase complex is composed of three subunits. PurQ produces an ammonia molecule by converting glutamine to glutamate. PurL transfers the ammonia molecule to FGAR to form FGAM in an ATP-dependent manner. PurS interacts with PurQ and PurL and is thought to assist in the transfer of the ammonia molecule from PurQ to PurL. The chain is Phosphoribosylformylglycinamidine synthase subunit PurQ from Roseobacter denitrificans (strain ATCC 33942 / OCh 114) (Erythrobacter sp. (strain OCh 114)).